A 524-amino-acid polypeptide reads, in one-letter code: Light-independent protochlorophyllide reductase subunit B (524 aa).

Asp-36 provides a ligand contact to [4Fe-4S] cluster. The active-site Proton donor is the Asp-290. 425-426 (GL) contacts substrate.

Belongs to the ChlB/BchB/BchZ family. Protochlorophyllide reductase is composed of three subunits; ChlL, ChlN and ChlB. Forms a heterotetramer of two ChlB and two ChlN subunits. The cofactor is [4Fe-4S] cluster.

It carries out the reaction chlorophyllide a + oxidized 2[4Fe-4S]-[ferredoxin] + 2 ADP + 2 phosphate = protochlorophyllide a + reduced 2[4Fe-4S]-[ferredoxin] + 2 ATP + 2 H2O. The protein operates within porphyrin-containing compound metabolism; chlorophyll biosynthesis (light-independent). In terms of biological role, component of the dark-operative protochlorophyllide reductase (DPOR) that uses Mg-ATP and reduced ferredoxin to reduce ring D of protochlorophyllide (Pchlide) to form chlorophyllide a (Chlide). This reaction is light-independent. The NB-protein (ChlN-ChlB) is the catalytic component of the complex. The sequence is that of Light-independent protochlorophyllide reductase subunit B from Synechococcus sp. (strain CC9605).